A 293-amino-acid polypeptide reads, in one-letter code: N-acetylmannosamine kinase (293 aa).

ATP contacts are provided by residues 5-12 (AIDIGGTK) and 133-140 (GVGGGLVI). Zn(2+)-binding residues include H157, C167, C169, and C174.

It belongs to the ROK (NagC/XylR) family. NanK subfamily. As to quaternary structure, homodimer.

The enzyme catalyses an N-acyl-D-mannosamine + ATP = an N-acyl-D-mannosamine 6-phosphate + ADP + H(+). Its pathway is amino-sugar metabolism; N-acetylneuraminate degradation; D-fructose 6-phosphate from N-acetylneuraminate: step 2/5. Functionally, catalyzes the phosphorylation of N-acetylmannosamine (ManNAc) to ManNAc-6-P. The sequence is that of N-acetylmannosamine kinase from Vibrio vulnificus (strain YJ016).